A 215-amino-acid polypeptide reads, in one-letter code: MTKNWKVSSQDVFSQGPVVPVLVIKDVKHAVPLAKALIAGGIRVLEVTLRTEAALDVIKAIATEVPDAIIGAGTVTNAKQLAEVEAAGAMFAISPGMTSDLLDAGNKGGIALIPGISSISELMRGIDFGYTHFKFFPAEASGGVKAIKAIGGPFPDIAFCPTGGISPTNYLEYLSLPNVRCAGGSWLAPDDAVEAGDWDRITELAKQAVAGAAGI.

Catalysis depends on Glu-46, which acts as the Proton acceptor. 3 residues coordinate pyruvate: Arg-50, Thr-74, and Lys-134. The active-site Schiff-base intermediate with substrate is the Lys-134.

It belongs to the KHG/KDPG aldolase family. In terms of assembly, homotrimer.

It catalyses the reaction 2-dehydro-3-deoxy-6-phospho-D-gluconate = D-glyceraldehyde 3-phosphate + pyruvate. Its pathway is carbohydrate acid metabolism; 2-dehydro-3-deoxy-D-gluconate degradation; D-glyceraldehyde 3-phosphate and pyruvate from 2-dehydro-3-deoxy-D-gluconate: step 2/2. In terms of biological role, involved in the degradation of glucose via the Entner-Doudoroff pathway. Catalyzes the reversible, stereospecific retro-aldol cleavage of 2-keto-3-deoxy-6-phosphogluconate (KDPG) to pyruvate and D-glyceraldehyde-3-phosphate. Involved in the degradation of 3,6-anhydro-L-galactose (L-AnG), which is the major monomeric sugar of red macroalgae. The cleavage of KDPG to glyceraldehyde 3-phosphate and pyruvate is the sixth step of this pathway. The protein is 2-dehydro-3-deoxy-phosphogluconate aldolase of Pseudoalteromonas atlantica (strain T6c / ATCC BAA-1087).